The sequence spans 744 residues: Collagen alpha-1(VIII) chain (744 aa).

A signal peptide spans 1-27 (MAVQPGPPQLLQVLLTISLGSIRLIQA). The interval 29–117 (AYYGIKPLPP…GKEIPLASLR (89 aa)) is nonhelical region (NC2). The span at 101 to 110 (KEAVPKKGKE) shows a compositional bias: basic and acidic residues. Disordered regions lie at residues 101–434 (KEAV…PGLQ) and 463–584 (EAGH…QGEY). Positions 118 to 571 (GEQGPRGEPG…PGPPGPPGPP (454 aa)) are triple-helical region. Over residues 128–137 (PRGPPGPPGL) the composition is skewed to pro residues. Low complexity predominate over residues 168–190 (KPGAMGMPGAKGEIGPKGEIGPM). A compositionally biased stretch (gly residues) spans 203–217 (GLPGIGKPGGPGLPG). Residues 288 to 298 (KPGPPGEPGPQ) are compositionally biased toward pro residues. Positions 328–337 (GFPGGKGEQG) are enriched in gly residues. Pro residues predominate over residues 389–403 (PGEPGLPGIPGPMGP). The span at 411 to 420 (GPKGEGGIVG) shows a compositional bias: gly residues. 2 stretches are compositionally biased toward low complexity: residues 469–506 (LPGL…TGPS) and 540–556 (LHGP…QGQP). Positions 558–579 (LPGPPGPPGPPGPPAVMPPTPA) are enriched in pro residues. A nonhelical region (NC1) region spans residues 572 to 744 (AVMPPTPAPQ…SFSGYLLYPM (173 aa)). In terms of domain architecture, C1q spans 611 to 744 (PAYEMPAFTA…SFSGYLLYPM (134 aa)).

In terms of assembly, homotrimers, or heterotrimers in association with alpha 2(VIII) type collagens. Four homotrimers can form a tetrahedron stabilized by central interacting C-terminal NC1 trimers. Prolines at the third position of the tripeptide repeating unit (G-X-Y) are hydroxylated in some or all of the chains.

The protein localises to the secreted. The protein resides in the extracellular space. It is found in the extracellular matrix. It localises to the basement membrane. In terms of biological role, macromolecular component of the subendothelium. Major component of the Descemet's membrane (basement membrane) of corneal endothelial cells. Also a component of the endothelia of blood vessels. Necessary for migration and proliferation of vascular smooth muscle cells and thus, has a potential role in the maintenance of vessel wall integrity and structure, in particular in atherogenesis. The polypeptide is Collagen alpha-1(VIII) chain (COL8A1) (Gallus gallus (Chicken)).